The sequence spans 302 residues: ATP synthase mitochondrial F1 complex assembly factor 1 (302 aa).

It belongs to the ATP11 family. Interacts with ATP5F1B; involved in the assembly of the F1 component of the mitochondrial ATP synthase (ATPase).

The protein resides in the mitochondrion inner membrane. Has a complex stabilizing activity in the assembly of the mitochondrial F1-F0 complex. The polypeptide is ATP synthase mitochondrial F1 complex assembly factor 1 (atpaf1) (Danio rerio (Zebrafish)).